The chain runs to 146 residues: Ecotin-like protein 1 (146 aa).

The protein belongs to the protease inhibitor I11 (ecotin) family.

The sequence is that of Ecotin-like protein 1 (ISP1) from Leishmania braziliensis.